The primary structure comprises 312 residues: Olfactory receptor 1D5 (312 aa).

The Extracellular segment spans residues 1–25 (MDGDNQSENSQFLLLGISESPEQQQ). N-linked (GlcNAc...) asparagine glycosylation is present at asparagine 5. Residues 26–49 (ILFWMFLSMYLVTVLGNVLIILAI) form a helical membrane-spanning segment. Over 50 to 57 (SSDSRLHT) the chain is Cytoplasmic. The helical transmembrane segment at 58-79 (PMYFFLANLSFTDLFFVTNTIP) threads the bilayer. Topologically, residues 80 to 100 (KMLVNLQSQNKAISYAGCLTQ) are extracellular. Residues cysteine 97 and cysteine 189 are joined by a disulfide bond. The helical transmembrane segment at 101-120 (LYFLVSLVTLDNLILAVMAY) threads the bilayer. The Cytoplasmic portion of the chain corresponds to 121 to 140 (DRYVAICCPLHYVTAMSPGL). A helical transmembrane segment spans residues 141 to 158 (CVLLLSLCWGLSVFYGLL). The Extracellular segment spans residues 159–196 (LTLLLTRVTFCGPREIHYLFCDMYILLRLACSNTHIIH). Residues 197–220 (TVLVATGCFIFLTPLGFMTTSYVR) form a helical membrane-spanning segment. The Cytoplasmic segment spans residues 221 to 237 (IVRTILQIPSASKKYKA). Residues 238–260 (FSTCASHLGVVSLFYGTLAMVYL) traverse the membrane as a helical segment. Over 261-271 (QPLHTYSMKDS) the chain is Extracellular. A helical transmembrane segment spans residues 272–291 (VATVMYAVVTPMMNPFIHSL). At 292–312 (RNKDMHGALGRVLRRLFQRPK) the chain is on the cytoplasmic side.

Belongs to the G-protein coupled receptor 1 family.

It is found in the cell membrane. In terms of biological role, odorant receptor. This chain is Olfactory receptor 1D5 (OR1D5), found in Pan troglodytes (Chimpanzee).